Here is a 137-residue protein sequence, read N- to C-terminus: uncharacterized protein (137 aa).

The disordered stretch occupies residues 1–26 (MKDKMWCEDTAQPHRRLPAPPSSSSP).

This is an uncharacterized protein from Homo sapiens (Human).